A 99-amino-acid chain; its full sequence is Large ribosomal subunit protein uL23 (99 aa).

This sequence belongs to the universal ribosomal protein uL23 family. In terms of assembly, part of the 50S ribosomal subunit. Contacts protein L29, and trigger factor when it is bound to the ribosome.

In terms of biological role, one of the early assembly proteins it binds 23S rRNA. One of the proteins that surrounds the polypeptide exit tunnel on the outside of the ribosome. Forms the main docking site for trigger factor binding to the ribosome. In Lachnospira eligens (strain ATCC 27750 / DSM 3376 / VPI C15-48 / C15-B4) (Eubacterium eligens), this protein is Large ribosomal subunit protein uL23.